Reading from the N-terminus, the 1394-residue chain is DNA-directed RNA polymerase subunit beta' (1394 aa).

Residues C71, C73, C86, and C89 each coordinate Zn(2+). Mg(2+) contacts are provided by D462, D464, and D466. 4 residues coordinate Zn(2+): C810, C883, C890, and C893.

This sequence belongs to the RNA polymerase beta' chain family. The RNAP catalytic core consists of 2 alpha, 1 beta, 1 beta' and 1 omega subunit. When a sigma factor is associated with the core the holoenzyme is formed, which can initiate transcription. Mg(2+) is required as a cofactor. Requires Zn(2+) as cofactor.

It catalyses the reaction RNA(n) + a ribonucleoside 5'-triphosphate = RNA(n+1) + diphosphate. Its function is as follows. DNA-dependent RNA polymerase catalyzes the transcription of DNA into RNA using the four ribonucleoside triphosphates as substrates. This chain is DNA-directed RNA polymerase subunit beta', found in Beijerinckia indica subsp. indica (strain ATCC 9039 / DSM 1715 / NCIMB 8712).